The sequence spans 818 residues: Patatin-like phospholipase domain-containing protein YALI0D16379g (818 aa).

Disordered regions lie at residues 1–50 (MLKL…RDVN) and 154–178 (EEKR…KTKE). Residues 22-38 (SQQLTLDSPEGSETSSR) are compositionally biased toward polar residues. Positions 164 to 178 (KDKEGSEGDKTKTKE) are enriched in basic and acidic residues. Residues 223–243 (WPALFFIGMWLLFLTTIYASV) traverse the membrane as a helical segment. Residues 398–589 (LCLSGGGCFA…RTDIPVDALN (192 aa)) form the PNPLA domain. Positions 429 to 433 (GTSGG) match the GXSXG motif. Ser431 (nucleophile) is an active-site residue. Residue Asp576 is the Proton acceptor of the active site. Residues 781–805 (AGTDISSSNSDYDHEPQWEMDEGDS) are disordered.

The protein belongs to the PLPL family.

The protein resides in the membrane. Probable lipid hydrolase. The chain is Patatin-like phospholipase domain-containing protein YALI0D16379g from Yarrowia lipolytica (strain CLIB 122 / E 150) (Yeast).